The sequence spans 92 residues: Transcription factor PRE4 (92 aa).

The bHLH domain maps to 5-60 (KSRSRQTGASMITDEQINDLVLQLHRLLPELANNRRSGKVSASRVLQETCSYIRNL).

This sequence belongs to the bHLH protein family. In terms of assembly, interacts with HFR1 and IBH1. In terms of tissue distribution, expressed in roots, leaves, stems and flowers.

It is found in the nucleus. Atypical and probable non DNA-binding bHLH transcription factor that integrates multiple signaling pathways to regulate cell elongation and plant development. Regulates light responses by binding and inhibiting the activity of the bHLH transcription factor HFR1, a critical regulator of light signaling and shade avoidance. May have a regulatory role in various aspects of gibberellin-dependent growth and development. The protein is Transcription factor PRE4 (PRE4) of Arabidopsis thaliana (Mouse-ear cress).